A 231-amino-acid polypeptide reads, in one-letter code: Cytidylate kinase (231 aa).

17-25 is an ATP binding site; the sequence is GPTASGKGT.

The protein belongs to the cytidylate kinase family. Type 1 subfamily.

The protein localises to the cytoplasm. The enzyme catalyses CMP + ATP = CDP + ADP. It catalyses the reaction dCMP + ATP = dCDP + ADP. This is Cytidylate kinase from Ralstonia pickettii (strain 12J).